A 228-amino-acid chain; its full sequence is Ribosomal RNA small subunit methyltransferase G (228 aa).

S-adenosyl-L-methionine-binding positions include glycine 89, leucine 94, 140–141 (VE), and arginine 159.

This sequence belongs to the methyltransferase superfamily. RNA methyltransferase RsmG family.

It localises to the cytoplasm. The catalysed reaction is guanosine(527) in 16S rRNA + S-adenosyl-L-methionine = N(7)-methylguanosine(527) in 16S rRNA + S-adenosyl-L-homocysteine. In terms of biological role, specifically methylates the N7 position of guanine in position 527 of 16S rRNA. The chain is Ribosomal RNA small subunit methyltransferase G from Burkholderia ambifaria (strain MC40-6).